A 429-amino-acid polypeptide reads, in one-letter code: MSMKAPRGTVDLLPEQSIKWQFAESKIKEICHNYHYQEIRTPLFEHTEVFQRGVGDTTDIVQKEMYTFEDRGGRSLTLRPEGTASVARAYVENKLFGSPNQPTKLFYFGSMFRYERPQKGRMRQLNQFGTEVIGSEDPAVDAEVMDFAMNIYKSLGLKSVKLVINSLGDQESRESHRNALIQHFEPHREELCHDCQNRLDKNPLRVLDCKKDRDHPAMGTAPKITDFLNEYSKTYFADVMTYLDALDIEYVVDPNLVRGLDYYNHTAFEIMSEAEGFGAITTLAGGGRYNGLVEEFGGPSSPGIGFGMGLERLIMALEAENITLPIDQQLDCFVANMGDESKLEATKVVKRLRDNGIQADMDYQKRKMKGQLKAADRYQSKFVIFLGDDEIEKQEVTLKEMSTGDQSEVSMSQLVEVLQEKLNGGKIYE.

Belongs to the class-II aminoacyl-tRNA synthetase family. As to quaternary structure, homodimer.

The protein resides in the cytoplasm. The enzyme catalyses tRNA(His) + L-histidine + ATP = L-histidyl-tRNA(His) + AMP + diphosphate + H(+). The sequence is that of Histidine--tRNA ligase from Oceanobacillus iheyensis (strain DSM 14371 / CIP 107618 / JCM 11309 / KCTC 3954 / HTE831).